The following is a 137-amino-acid chain: Chaperone protein YscB (137 aa).

As to quaternary structure, interacts with SycN to form a complex which specifically binds to YopN.

It is found in the cytoplasm. The protein localises to the cell inner membrane. Functions as a specific chaperone for YopN. It could facilitate the secretion and the subsequent translocation of YopN. The sequence is that of Chaperone protein YscB (yscB) from Yersinia enterocolitica.